The primary structure comprises 145 residues: Protein FAM216B (145 aa).

Residues 92–121 are disordered; the sequence is TKRASAKAGPHRTVPQRAAGRTRTQPSARP.

It belongs to the FAM216 family.

This Bos taurus (Bovine) protein is Protein FAM216B (FAM216B).